The following is a 1891-amino-acid chain: TATA-binding protein-associated factor mot1 (1891 aa).

An HEAT 1 repeat occupies 30–68; sequence PDELFNLLGRILPYLRSKSWDTRAAAAKAIGLIVANADT. Disordered regions lie at residues 184–216, 241–283, and 295–316; these read FVAS…LSKR, LSSR…LDRS, and FKGA…EGPN. The segment covering 264 to 275 has biased composition (basic and acidic residues); that stretch reads ENGEERNGDSKP. HEAT repeat units lie at residues 473-511 and 569-606; these read SKLM…EFVK and SSFG…LEGE. The segment covering 699–710 has biased composition (low complexity); that stretch reads SAAAPARSSPAS. Residues 699–740 form a disordered region; sequence SAAAPARSSPASNTPEGTKGRRRKSEKKEAPPPSAHNVDGHM. HEAT repeat units lie at residues 957-996, 1139-1177, 1181-1216, and 1219-1257; these read PKKP…YYTT, YPWV…VITV, TMLV…VMED, and LPYV…LVPL. Residues 1316-1489 enclose the Helicase ATP-binding domain; it reads AFLNRYNLHG…WSLFDFLMPG (174 aa). 1329–1336 contacts ATP; it reads DDMGLGKT. The DEAH box motif lies at 1440-1443; the sequence is DEGH. One copy of the HEAT 8 repeat lies at 1526–1565; sequence EALHKQVLPFLLRRLKEEVLNDLPPKIIQNYYCDPSELQR. The 151-residue stretch at 1663–1813 folds into the Helicase C-terminal domain; sequence DLSGASYVSP…STVVNQQNAG (151 aa).

Belongs to the SNF2/RAD54 helicase family. Forms the NCT transcriptional regulatory complex with nctA and nctB.

The protein resides in the nucleus. Its function is as follows. Regulates transcription in association with TATA binding protein (TBP). Removes TBP from the TATA box via its C-terminal ATPase activity. Both transcription activation and repression require its ATPase activity. Part of the NCT transcriptional regulatory complex that acts as a key regulator of ergosterol biosynthesis and the azole exporter cdr1B. The NCT complex binds the promoters of genes linked to azole susceptibility, and especially represses the expression of cdr1B transporter. The protein is TATA-binding protein-associated factor mot1 of Aspergillus fumigatus (strain CBS 144.89 / FGSC A1163 / CEA10) (Neosartorya fumigata).